Here is a 293-residue protein sequence, read N- to C-terminus: Phosphatidylserine decarboxylase proenzyme (293 aa).

Active-site charge relay system; for autoendoproteolytic cleavage activity residues include Asp-88, His-144, and Ser-247. Ser-247 (schiff-base intermediate with substrate; via pyruvic acid; for decarboxylase activity) is an active-site residue. A Pyruvic acid (Ser); by autocatalysis modification is found at Ser-247.

This sequence belongs to the phosphatidylserine decarboxylase family. PSD-B subfamily. Prokaryotic type I sub-subfamily. In terms of assembly, heterodimer of a large membrane-associated beta subunit and a small pyruvoyl-containing alpha subunit. Pyruvate serves as cofactor. In terms of processing, is synthesized initially as an inactive proenzyme. Formation of the active enzyme involves a self-maturation process in which the active site pyruvoyl group is generated from an internal serine residue via an autocatalytic post-translational modification. Two non-identical subunits are generated from the proenzyme in this reaction, and the pyruvate is formed at the N-terminus of the alpha chain, which is derived from the carboxyl end of the proenzyme. The autoendoproteolytic cleavage occurs by a canonical serine protease mechanism, in which the side chain hydroxyl group of the serine supplies its oxygen atom to form the C-terminus of the beta chain, while the remainder of the serine residue undergoes an oxidative deamination to produce ammonia and the pyruvoyl prosthetic group on the alpha chain. During this reaction, the Ser that is part of the protease active site of the proenzyme becomes the pyruvoyl prosthetic group, which constitutes an essential element of the active site of the mature decarboxylase.

It localises to the cell membrane. It catalyses the reaction a 1,2-diacyl-sn-glycero-3-phospho-L-serine + H(+) = a 1,2-diacyl-sn-glycero-3-phosphoethanolamine + CO2. It participates in phospholipid metabolism; phosphatidylethanolamine biosynthesis; phosphatidylethanolamine from CDP-diacylglycerol: step 2/2. Functionally, catalyzes the formation of phosphatidylethanolamine (PtdEtn) from phosphatidylserine (PtdSer). The chain is Phosphatidylserine decarboxylase proenzyme from Xylella fastidiosa (strain 9a5c).